Consider the following 820-residue polypeptide: Serine/threonine-protein phosphatase 4 regulatory subunit 3 (820 aa).

One can recognise a WH1 domain in the interval 1 to 100; it reads MSDTRRRVKV…DEIWEKICQV (100 aa). Disordered regions lie at residues 687-711 and 750-820; these read EDEEEEGEAVVPPVEKTKTEDDFPE and AANG…RLGS. A compositionally biased stretch (basic and acidic residues) spans 701 to 711; the sequence is EKTKTEDDFPE. Polar residues predominate over residues 750–761; the sequence is AANGANSTNSKS. A compositionally biased stretch (low complexity) spans 770 to 784; sequence SSNGSSSKNTSLTTT. Over residues 798 to 809 the composition is skewed to acidic residues; that stretch reads YPDDEDEEEEED.

It belongs to the SMEK family. In terms of assembly, serine/threonine-protein phosphatase 4 (PP4) occurs in different assemblies of the catalytic and one or more regulatory subunits.

Regulatory subunit of serine/threonine-protein phosphatase 4 (PP4). The chain is Serine/threonine-protein phosphatase 4 regulatory subunit 3 from Xenopus tropicalis (Western clawed frog).